Consider the following 298-residue polypeptide: Serine/threonine-protein kinase 1 (298 aa).

The region spanning 38–276 is the Protein kinase domain; that stretch reads FIATRPMFEG…FKSLVSHPWF (239 aa). ATP is bound by residues 45 to 53 and Lys-65; that span reads FEGGRNNVF. The Proton acceptor role is filled by Asp-152.

This sequence belongs to the protein kinase superfamily. Ser/Thr protein kinase family.

It is found in the virion. The protein localises to the host cytoplasm. It catalyses the reaction L-seryl-[protein] + ATP = O-phospho-L-seryl-[protein] + ADP + H(+). The enzyme catalyses L-threonyl-[protein] + ATP = O-phospho-L-threonyl-[protein] + ADP + H(+). Essential for viral replication. It may mediate the virus progression through DNA replication. This African swine fever virus (strain Badajoz 1971 Vero-adapted) (Ba71V) protein is Serine/threonine-protein kinase 1.